Reading from the N-terminus, the 63-residue chain is Cytochrome c oxidase subunit 7C, mitochondrial (63 aa).

The transit peptide at 1–16 directs the protein to the mitochondrion; the sequence is MLGHSIRRFTTSVVRR. Topologically, residues 17-33 are mitochondrial matrix; it reads SHYEEGPGKNLPFSVEN. N6-acetyllysine; alternate is present on lysine 25. An N6-succinyllysine; alternate modification is found at lysine 25. A helical membrane pass occupies residues 34 to 60; sequence KWTLLVKMCLFFGSAFSVPFLIVRHQL. Residues 61 to 63 are Mitochondrial intermembrane-facing; it reads LKQ.

Belongs to the cytochrome c oxidase VIIc family. Component of the cytochrome c oxidase (complex IV, CIV), a multisubunit enzyme composed of 14 subunits. The complex is composed of a catalytic core of 3 subunits MT-CO1, MT-CO2 and MT-CO3, encoded in the mitochondrial DNA, and 11 supernumerary subunits COX4I, COX5A, COX5B, COX6A, COX6B, COX6C, COX7A, COX7B, COX7C, COX8 and NDUFA4, which are encoded in the nuclear genome. The complex exists as a monomer or a dimer and forms supercomplexes (SCs) in the inner mitochondrial membrane with NADH-ubiquinone oxidoreductase (complex I, CI) and ubiquinol-cytochrome c oxidoreductase (cytochrome b-c1 complex, complex III, CIII), resulting in different assemblies (supercomplex SCI(1)III(2)IV(1) and megacomplex MCI(2)III(2)IV(2)). Interacts with RAB5IF.

Its subcellular location is the mitochondrion inner membrane. The protein operates within energy metabolism; oxidative phosphorylation. Component of the cytochrome c oxidase, the last enzyme in the mitochondrial electron transport chain which drives oxidative phosphorylation. The respiratory chain contains 3 multisubunit complexes succinate dehydrogenase (complex II, CII), ubiquinol-cytochrome c oxidoreductase (cytochrome b-c1 complex, complex III, CIII) and cytochrome c oxidase (complex IV, CIV), that cooperate to transfer electrons derived from NADH and succinate to molecular oxygen, creating an electrochemical gradient over the inner membrane that drives transmembrane transport and the ATP synthase. Cytochrome c oxidase is the component of the respiratory chain that catalyzes the reduction of oxygen to water. Electrons originating from reduced cytochrome c in the intermembrane space (IMS) are transferred via the dinuclear copper A center (CU(A)) of subunit 2 and heme A of subunit 1 to the active site in subunit 1, a binuclear center (BNC) formed by heme A3 and copper B (CU(B)). The BNC reduces molecular oxygen to 2 water molecules using 4 electrons from cytochrome c in the IMS and 4 protons from the mitochondrial matrix. The protein is Cytochrome c oxidase subunit 7C, mitochondrial (COX7C) of Macaca fascicularis (Crab-eating macaque).